The chain runs to 296 residues: HTH-type transcriptional regulator GltR (296 aa).

The HTH lysR-type domain occupies 1–58 (MNIQLLQVFLTTAREGSISKAALTLNYAQSNVTNKIQQLENDLQTKLFYRHSRGITLT). The H-T-H motif DNA-binding region spans 18–37 (ISKAALTLNYAQSNVTNKIQ).

It belongs to the LysR transcriptional regulatory family.

In terms of biological role, positive regulator of glutamate biosynthesis (gltAB genes). Negatively regulates its own expression. The protein is HTH-type transcriptional regulator GltR (gltR) of Bacillus subtilis (strain 168).